Consider the following 351-residue polypeptide: Transcription factor Atoh1 (351 aa).

2 disordered regions span residues 16–39 (LGDH…PATL) and 89–116 (EAAA…SKSP). A compositionally biased stretch (pro residues) spans 26–36 (HHVPPLTPQPP). The 53-residue stretch at 156 to 208 (QRRLAANARERRRMHGLNHAFDQLRNVIPSFNNDKKLSKYETLQMAQIYINAL) folds into the bHLH domain. Disordered regions lie at residues 244–278 (GAGA…GPAS) and 308–351 (LSPS…DEAS). The span at 247–256 (ASAVAGAQPA) shows a compositional bias: low complexity. Pro residues predominate over residues 258–268 (GGGPRPTPPGP). Basic and acidic residues predominate over residues 332–351 (HRSDGEFSPHSHYSDSDEAS).

Efficient DNA binding requires dimerization with another bHLH protein. Developing nervous system, and in adult epithelial cells of the gastrointestinal tract.

It is found in the nucleus. Its function is as follows. Transcriptional regulator. Activates E box-dependent transcription in collaboration with TCF3/E47, but the activity is completely antagonized by the negative regulator of neurogenesis HES1. Plays a role in the differentiation of subsets of neural cells by activating E box-dependent transcription. The polypeptide is Transcription factor Atoh1 (Mus musculus (Mouse)).